The primary structure comprises 370 residues: uncharacterized protein (370 aa).

The OBG-type G domain maps to 62–293 (ATVALVGFPS…LKERMWRALG (232 aa)). Residues 68–75 (GFPSVGKS), 114–118 (DVPGL), and 243–246 (NKVD) each bind GTP. A TGS domain is found at 293–368 (GLIRIYMDKP…EDEDVLRVVA (76 aa)).

This sequence belongs to the TRAFAC class OBG-HflX-like GTPase superfamily. OBG GTPase family.

This is an uncharacterized protein from Halobacterium salinarum (strain ATCC 700922 / JCM 11081 / NRC-1) (Halobacterium halobium).